Consider the following 252-residue polypeptide: Electron transfer flavoprotein subunit beta (252 aa).

The protein belongs to the ETF beta-subunit/FixA family. In terms of assembly, heterodimer of an alpha and a beta subunit. The cofactor is AMP.

The protein resides in the cytoplasm. It functions in the pathway lipid metabolism; butanoate metabolism. In terms of biological role, part of an electron transfer flavoprotein involved in syntrophic growth of S.wolfei with butyrate. Probably receives electrons from butyryl-CoA dehydrogenases, and transfers them to the membrane-bound quinone oxidoreductase Swol_0698. The sequence is that of Electron transfer flavoprotein subunit beta from Syntrophomonas wolfei subsp. wolfei (strain DSM 2245B / Goettingen).